Here is a 113-residue protein sequence, read N- to C-terminus: Nucleoid-associated protein sync_0026 (113 aa).

The protein belongs to the YbaB/EbfC family. Homodimer.

The protein localises to the cytoplasm. Its subcellular location is the nucleoid. Functionally, binds to DNA and alters its conformation. May be involved in regulation of gene expression, nucleoid organization and DNA protection. This Synechococcus sp. (strain CC9311) protein is Nucleoid-associated protein sync_0026.